A 383-amino-acid chain; its full sequence is Meiotic recombination protein SPO11-2 (383 aa).

The 144-residue stretch at 24–167 (LLPHEARARI…LGIMASSRGL (144 aa)) folds into the Topo IIA-type catalytic domain. Tyr-124 functions as the O-(5'-phospho-DNA)-tyrosine intermediate in the catalytic mechanism. Residues Glu-217 and Asp-270 each coordinate Mg(2+).

This sequence belongs to the TOP6A family. Heterotetramer of 2 SPO11 (SPO11-1 and/or SPO11-2) and 2 MTOPVIB chains. Interacts with MTOPVIB. May form a heterodimer with SPO11-1. Interacts with PRD1. Does not interact with TOP6B. Mg(2+) serves as cofactor. Very low expression in flowers and shoots.

It is found in the nucleus. It carries out the reaction ATP-dependent breakage, passage and rejoining of double-stranded DNA.. Component of a topoisomerase 6 complex specifically required for meiotic recombination. Together with MTOPVIB, mediates DNA cleavage that forms the double-strand breaks (DSB) that initiate meiotic recombination. The complex promotes relaxation of negative and positive supercoiled DNA and DNA decatenation through cleavage and ligation cycles. The sequence is that of Meiotic recombination protein SPO11-2 (SPO11-2) from Arabidopsis thaliana (Mouse-ear cress).